A 161-amino-acid chain; its full sequence is Cyclic pyranopterin monophosphate synthase (161 aa).

Residues 75–77 (LCH) and 113–114 (ME) contribute to the substrate site. Aspartate 128 is a catalytic residue.

Belongs to the MoaC family. As to quaternary structure, homohexamer; trimer of dimers.

It catalyses the reaction (8S)-3',8-cyclo-7,8-dihydroguanosine 5'-triphosphate = cyclic pyranopterin phosphate + diphosphate. It functions in the pathway cofactor biosynthesis; molybdopterin biosynthesis. Functionally, catalyzes the conversion of (8S)-3',8-cyclo-7,8-dihydroguanosine 5'-triphosphate to cyclic pyranopterin monophosphate (cPMP). This Salmonella arizonae (strain ATCC BAA-731 / CDC346-86 / RSK2980) protein is Cyclic pyranopterin monophosphate synthase.